We begin with the raw amino-acid sequence, 297 residues long: 4-diphosphocytidyl-2-C-methyl-D-erythritol kinase (297 aa).

Lys-22 is an active-site residue. Residue 111–121 (PSQAGMGGGSS) coordinates ATP. Asp-153 is a catalytic residue.

The protein belongs to the GHMP kinase family. IspE subfamily.

The catalysed reaction is 4-CDP-2-C-methyl-D-erythritol + ATP = 4-CDP-2-C-methyl-D-erythritol 2-phosphate + ADP + H(+). It functions in the pathway isoprenoid biosynthesis; isopentenyl diphosphate biosynthesis via DXP pathway; isopentenyl diphosphate from 1-deoxy-D-xylulose 5-phosphate: step 3/6. Functionally, catalyzes the phosphorylation of the position 2 hydroxy group of 4-diphosphocytidyl-2C-methyl-D-erythritol. The chain is 4-diphosphocytidyl-2-C-methyl-D-erythritol kinase from Polaromonas naphthalenivorans (strain CJ2).